The chain runs to 403 residues: 4-hydroxy-3-methylbut-2-enyl diphosphate reductase (403 aa).

Cys66 is a binding site for [4Fe-4S] cluster. His96 contributes to the (2E)-4-hydroxy-3-methylbut-2-enyl diphosphate binding site. His96 serves as a coordination point for dimethylallyl diphosphate. His96 serves as a coordination point for isopentenyl diphosphate. Cys157 contacts [4Fe-4S] cluster. His185 is a binding site for (2E)-4-hydroxy-3-methylbut-2-enyl diphosphate. A dimethylallyl diphosphate-binding site is contributed by His185. Residue His185 coordinates isopentenyl diphosphate. Catalysis depends on Glu187, which acts as the Proton donor. Thr250 serves as a coordination point for (2E)-4-hydroxy-3-methylbut-2-enyl diphosphate. Residue Cys288 participates in [4Fe-4S] cluster binding. Positions 317, 318, 319, and 379 each coordinate (2E)-4-hydroxy-3-methylbut-2-enyl diphosphate. Dimethylallyl diphosphate is bound by residues Ser317, Ser318, Asn319, and Ser379. Residues Ser317, Ser318, Asn319, and Ser379 each contribute to the isopentenyl diphosphate site.

The protein belongs to the IspH family. It depends on [4Fe-4S] cluster as a cofactor.

It carries out the reaction isopentenyl diphosphate + 2 oxidized [2Fe-2S]-[ferredoxin] + H2O = (2E)-4-hydroxy-3-methylbut-2-enyl diphosphate + 2 reduced [2Fe-2S]-[ferredoxin] + 2 H(+). The catalysed reaction is dimethylallyl diphosphate + 2 oxidized [2Fe-2S]-[ferredoxin] + H2O = (2E)-4-hydroxy-3-methylbut-2-enyl diphosphate + 2 reduced [2Fe-2S]-[ferredoxin] + 2 H(+). It participates in isoprenoid biosynthesis; dimethylallyl diphosphate biosynthesis; dimethylallyl diphosphate from (2E)-4-hydroxy-3-methylbutenyl diphosphate: step 1/1. Its pathway is isoprenoid biosynthesis; isopentenyl diphosphate biosynthesis via DXP pathway; isopentenyl diphosphate from 1-deoxy-D-xylulose 5-phosphate: step 6/6. In terms of biological role, catalyzes the conversion of 1-hydroxy-2-methyl-2-(E)-butenyl 4-diphosphate (HMBPP) into a mixture of isopentenyl diphosphate (IPP) and dimethylallyl diphosphate (DMAPP). Acts in the terminal step of the DOXP/MEP pathway for isoprenoid precursor biosynthesis. The polypeptide is 4-hydroxy-3-methylbut-2-enyl diphosphate reductase (Picosynechococcus sp. (strain ATCC 27264 / PCC 7002 / PR-6) (Agmenellum quadruplicatum)).